Reading from the N-terminus, the 186-residue chain is Pyridoxal 5'-phosphate synthase subunit PdxT (186 aa).

Position 46–48 (46–48 (GES)) interacts with L-glutamine. The Nucleophile role is filled by Cys75. L-glutamine contacts are provided by residues Arg101 and 127–128 (IR). Residues His164 and Glu166 each act as charge relay system in the active site.

Belongs to the glutaminase PdxT/SNO family. In terms of assembly, in the presence of PdxS, forms a dodecamer of heterodimers. Only shows activity in the heterodimer.

The catalysed reaction is aldehydo-D-ribose 5-phosphate + D-glyceraldehyde 3-phosphate + L-glutamine = pyridoxal 5'-phosphate + L-glutamate + phosphate + 3 H2O + H(+). It catalyses the reaction L-glutamine + H2O = L-glutamate + NH4(+). It participates in cofactor biosynthesis; pyridoxal 5'-phosphate biosynthesis. Catalyzes the hydrolysis of glutamine to glutamate and ammonia as part of the biosynthesis of pyridoxal 5'-phosphate. The resulting ammonia molecule is channeled to the active site of PdxS. In Methanococcus aeolicus (strain ATCC BAA-1280 / DSM 17508 / OCM 812 / Nankai-3), this protein is Pyridoxal 5'-phosphate synthase subunit PdxT.